Here is a 359-residue protein sequence, read N- to C-terminus: Phosphate acyltransferase (359 aa).

This sequence belongs to the PlsX family. In terms of assembly, homodimer. Probably interacts with PlsY.

The protein resides in the cytoplasm. It carries out the reaction a fatty acyl-[ACP] + phosphate = an acyl phosphate + holo-[ACP]. It participates in lipid metabolism; phospholipid metabolism. Catalyzes the reversible formation of acyl-phosphate (acyl-PO(4)) from acyl-[acyl-carrier-protein] (acyl-ACP). This enzyme utilizes acyl-ACP as fatty acyl donor, but not acyl-CoA. The protein is Phosphate acyltransferase of Salmonella heidelberg (strain SL476).